The primary structure comprises 193 residues: MSTPAIIDIFRSSGALLEGHFKLTSGLHSNTYFQCAKVLQHPEYLTEICRNIASAFSDVTIDMVISPAVGGIVVGTETGRQLGVKTIFSERKNGEMVLRRGFTLSPEEKVLIVEDVITTGGSVAEVIDIVTKAGAIVAGVGSVVDRSNGKVTLAEKQFSLLCLEVKNYDPDTCPLCAENLPLDAPGSRSLTTS.

5-phospho-alpha-D-ribose 1-diphosphate is bound at residue 114–122 (EDVITTGGS). Threonine 118 and arginine 146 together coordinate orotate.

The protein belongs to the purine/pyrimidine phosphoribosyltransferase family. PyrE subfamily. Homodimer. The cofactor is Mg(2+).

The enzyme catalyses orotidine 5'-phosphate + diphosphate = orotate + 5-phospho-alpha-D-ribose 1-diphosphate. The protein operates within pyrimidine metabolism; UMP biosynthesis via de novo pathway; UMP from orotate: step 1/2. Functionally, catalyzes the transfer of a ribosyl phosphate group from 5-phosphoribose 1-diphosphate to orotate, leading to the formation of orotidine monophosphate (OMP). This is Orotate phosphoribosyltransferase from Chlorobium phaeobacteroides (strain BS1).